A 404-amino-acid chain; its full sequence is Deoxyguanosinetriphosphate triphosphohydrolase-like protein (404 aa).

A disordered region spans residues 1–32 (MAVGMAAPHATYASDPARSRGRLFDEPPSKTR). The segment covering 22–32 (RLFDEPPSKTR) has biased composition (basic and acidic residues). The HD domain maps to 69–217 (RLTHTLEVAQ…AAIADDIAYD (149 aa)).

The protein belongs to the dGTPase family. Type 2 subfamily.

This is Deoxyguanosinetriphosphate triphosphohydrolase-like protein from Nitrobacter hamburgensis (strain DSM 10229 / NCIMB 13809 / X14).